A 219-amino-acid polypeptide reads, in one-letter code: MTDQNQKANQGNGLQTTNLQAHAQRKHNLRPSSEGIKKAVSKKEGGGHNRNNQNRRFQKPAFKSEFEERIVKLKRISKTTKGGRNMRFSVLVVVGNRKGKIGYGIAKALEVPNAIKKAIKAAHNSLHTIEIHKGSIYHEVIGRSGASRVLLKPAPQGTGIIAGGAIRAIIELAGYSDIYTKNLGRNTPINMIHATMDGILKQLSPRRVAILRNKNLNEL.

Over residues 1–21 (MTDQNQKANQGNGLQTTNLQA) the composition is skewed to polar residues. A disordered region spans residues 1–61 (MTDQNQKANQ…NQNRRFQKPA (61 aa)). Positions 35 to 47 (GIKKAVSKKEGGG) are enriched in basic and acidic residues. Residues 66–129 (FEERIVKLKR…KAAHNSLHTI (64 aa)) enclose the S5 DRBM domain.

It belongs to the universal ribosomal protein uS5 family. Part of the 30S ribosomal subunit. Contacts proteins S4 and S8.

Its function is as follows. With S4 and S12 plays an important role in translational accuracy. Functionally, located at the back of the 30S subunit body where it stabilizes the conformation of the head with respect to the body. This chain is Small ribosomal subunit protein uS5, found in Mycoplasma pneumoniae (strain ATCC 29342 / M129 / Subtype 1) (Mycoplasmoides pneumoniae).